The sequence spans 589 residues: MFDHDVEYLITALSSETRIQYDQRLLDEIAANVVYYVPRVKSPDTLYRLVGALFRSQFIVQLPPLRLLHIVKDVFLWKLEVSEPTLPISKFYLVWNAVFESHRATWNLSQLMVLDGVLVTYPSFKQLNNAYFIDESSNKTALYYRNWKLQLFSPIWAQLWNTAIVRANLSIQHCLLIALALLFNQSNRSALLHGVDVSWNLVTEKLLDLLEEYVHGIVQPMEIFSTDSVLSTNLNHLASCLTSSITRSNEATLVNSVRKLERICRYLSDTVASLKEQQLDFKFQNVFILIILALKELSAMNMTILPNHKDTFYSMICLSLFHVHVLTQKIGTVGFPSYDYVYDNLVTYFIVMDDLSKITTVLELMKRNNTKQDPNKLVFYINFLNKITNYYGCRIRLPFITEFIEPLLHFDVFFSGKTGNTLDIEIKESIHTLTITVLSIDSSYSSQVAQWQVSRILVYLKMSMDQFIAGKLSANQILLIFGHLSTQLPSLHNYNKHLLRDSLHETYIRIVNVKNPEKKNVLIECLIVQIAFINNPHHLIGWLNICLQLINTHNKKLLQQLWEMVSSLESSLAIDWWYTTVLSSQSSKL.

The short motif at 587-589 (SKL) is the Microbody targeting signal element.

The protein localises to the peroxisome matrix. Its function is as follows. Required for peroxisome assembly. In Saccharomyces cerevisiae (strain ATCC 204508 / S288c) (Baker's yeast), this protein is Peroxisomal biogenesis factor 8 (PEX8).